Reading from the N-terminus, the 107-residue chain is U1-lycotoxin-Ls1b (107 aa).

Residues 1 to 20 (MMKVLVVIALLVTLISYSSS) form the signal peptide. Positions 21-41 (EGIDDLEADELLSLMANEQTR) are excised as a propeptide. 4 cysteine pairs are disulfide-bonded: Cys-44–Cys-59, Cys-51–Cys-68, Cys-58–Cys-86, and Cys-70–Cys-84.

Belongs to the neurotoxin 19 (CSTX) family. 04 (U1-Lctx) subfamily. Expressed by the venom gland.

It is found in the secreted. The polypeptide is U1-lycotoxin-Ls1b (Lycosa singoriensis (Wolf spider)).